Here is a 227-residue protein sequence, read N- to C-terminus: ATP phosphoribosyltransferase (227 aa).

It belongs to the ATP phosphoribosyltransferase family. Short subfamily. Heteromultimer composed of HisG and HisZ subunits.

Its subcellular location is the cytoplasm. It carries out the reaction 1-(5-phospho-beta-D-ribosyl)-ATP + diphosphate = 5-phospho-alpha-D-ribose 1-diphosphate + ATP. It participates in amino-acid biosynthesis; L-histidine biosynthesis; L-histidine from 5-phospho-alpha-D-ribose 1-diphosphate: step 1/9. Its function is as follows. Catalyzes the condensation of ATP and 5-phosphoribose 1-diphosphate to form N'-(5'-phosphoribosyl)-ATP (PR-ATP). Has a crucial role in the pathway because the rate of histidine biosynthesis seems to be controlled primarily by regulation of HisG enzymatic activity. The chain is ATP phosphoribosyltransferase from Nitrosospira multiformis (strain ATCC 25196 / NCIMB 11849 / C 71).